We begin with the raw amino-acid sequence, 521 residues long: uncharacterized protein (521 aa).

The next 10 membrane-spanning stretches (helical) occupy residues 103–123 (NLML…VPMP), 136–156 (FWFF…LWIT), 177–197 (YILF…FTAW), 200–220 (ITFT…GISF), 259–279 (AYAH…VYIV), 299–319 (IMYV…SSWI), 327–346 (YALV…VYVR), 358–378 (FVLV…LITM), 411–431 (CVAS…LHFG), and 450–470 (FKLT…ASYL).

It localises to the membrane. This is an uncharacterized protein from Schizosaccharomyces pombe (strain 972 / ATCC 24843) (Fission yeast).